We begin with the raw amino-acid sequence, 359 residues long: EGF-like domain containing protein 2 (359 aa).

The signal sequence occupies residues 1–20 (MPPFISHFFLLSTFASLALC). EGF-like domains lie at 21–55 (SFYC…FNCG) and 61–93 (ISAA…PTCQ). 6 cysteine pairs are disulfide-bonded: cysteine 24–cysteine 37, cysteine 31–cysteine 43, cysteine 45–cysteine 54, cysteine 65–cysteine 75, cysteine 69–cysteine 81, and cysteine 83–cysteine 92.

In terms of tissue distribution, prismatic layer of shell (at protein level). Expressed primarily in the mantle with highest level in the mantle edge and lower level in the mantle pallium.

Its subcellular location is the secreted. In Margaritifera margaritifera (Freshwater pearl mussel), this protein is EGF-like domain containing protein 2.